We begin with the raw amino-acid sequence, 267 residues long: Multivesicular body subunit 12A (267 aa).

In terms of domain architecture, MABP spans 7-146; it reads AAPLSGVGWA…SFAIWCKKGA (140 aa). The SH3-binding motif lies at 154-159; it reads PVPKPR. The region spanning 210–259 is the UMA domain; it reads MDGVPFTLHPKFERSPKSDSSAILTDLTVKSLADIEKEYNYTFVVERTAA.

Belongs to the MVB12 family. Component of the ESCRT-I complex (endosomal sorting complex required for transport I).

The protein resides in the cytoplasm. The protein localises to the endosome. It is found in the late endosome membrane. Component of the ESCRT-I complex, a regulator of vesicular trafficking process. Required for the sorting of endocytic ubiquitinated cargos into multivesicular bodies. This is Multivesicular body subunit 12A (MVB12A) from Gallus gallus (Chicken).